Consider the following 468-residue polypeptide: ATP synthase subunit beta (468 aa).

155–162 contacts ATP; sequence GGAGVGKT.

It belongs to the ATPase alpha/beta chains family. F-type ATPases have 2 components, CF(1) - the catalytic core - and CF(0) - the membrane proton channel. CF(1) has five subunits: alpha(3), beta(3), gamma(1), delta(1), epsilon(1). CF(0) has three main subunits: a(1), b(2) and c(9-12). The alpha and beta chains form an alternating ring which encloses part of the gamma chain. CF(1) is attached to CF(0) by a central stalk formed by the gamma and epsilon chains, while a peripheral stalk is formed by the delta and b chains.

The protein localises to the cell membrane. The catalysed reaction is ATP + H2O + 4 H(+)(in) = ADP + phosphate + 5 H(+)(out). In terms of biological role, produces ATP from ADP in the presence of a proton gradient across the membrane. The catalytic sites are hosted primarily by the beta subunits. In Streptococcus pneumoniae (strain CGSP14), this protein is ATP synthase subunit beta.